We begin with the raw amino-acid sequence, 463 residues long: Hexose-6-phosphate:phosphate antiporter (463 aa).

Residues methionine 1–tryptophan 24 lie on the Cytoplasmic side of the membrane. A helical membrane pass occupies residues phenylalanine 25 to isoleucine 45. Residues arginine 46–tyrosine 60 are Periplasmic-facing. Residues glycine 61–glycine 81 form a helical membrane-spanning segment. Residues lysine 82–glutamine 96 lie on the Cytoplasmic side of the membrane. A helical transmembrane segment spans residues phenylalanine 97–glycine 117. At alanine 118–serine 122 the chain is on the periplasmic side. The chain crosses the membrane as a helical span at residues leucine 123–cysteine 143. The Cytoplasmic portion of the chain corresponds to serine 144–threonine 159. The chain crosses the membrane as a helical span at residues phenylalanine 160–leucine 180. Residues phenylalanine 181–glycine 189 lie on the Periplasmic side of the membrane. A helical membrane pass occupies residues histidine 190–leucine 210. The Cytoplasmic segment spans residues arginine 211–lysine 259. Residues valine 260 to glutamine 280 form a helical membrane-spanning segment. Over tryptophan 281 to alanine 297 the chain is Periplasmic. A helical membrane pass occupies residues isoleucine 298 to leucine 318. At serine 319 to arginine 326 the chain is on the cytoplasmic side. The chain crosses the membrane as a helical span at residues alanine 327–alanine 347. The Periplasmic portion of the chain corresponds to serine 348–leucine 357. The helical transmembrane segment at phenylalanine 358–phenylalanine 378 threads the bilayer. The Cytoplasmic segment spans residues valine 379–lysine 382. Residues alanine 383 to alanine 403 traverse the membrane as a helical segment. Over lysine 404–threonine 425 the chain is Periplasmic. A helical transmembrane segment spans residues phenylalanine 426–methionine 446. The Cytoplasmic segment spans residues glutamate 447–alanine 463.

It belongs to the major facilitator superfamily. Organophosphate:Pi antiporter (OPA) (TC 2.A.1.4) family.

Its subcellular location is the cell inner membrane. Functionally, mediates the exchange of external hexose 6-phosphate and internal inorganic phosphate. This chain is Hexose-6-phosphate:phosphate antiporter (uhpT), found in Salmonella typhimurium (strain LT2 / SGSC1412 / ATCC 700720).